A 753-amino-acid chain; its full sequence is 5-methyltetrahydropteroyltriglutamate--homocysteine methyltransferase (753 aa).

5-methyltetrahydropteroyltri-L-glutamate-binding positions include 17 to 20 (RELK) and Lys-117. L-homocysteine is bound by residues 431–433 (IGS) and Glu-484. L-methionine-binding positions include 431 to 433 (IGS) and Glu-484. 5-methyltetrahydropteroyltri-L-glutamate is bound by residues 515 to 516 (RC) and Trp-561. Residue Asp-599 coordinates L-homocysteine. Asp-599 lines the L-methionine pocket. Glu-605 contacts 5-methyltetrahydropteroyltri-L-glutamate. His-641, Cys-643, and Glu-665 together coordinate Zn(2+). His-694 serves as the catalytic Proton donor. Cys-726 lines the Zn(2+) pocket.

It belongs to the vitamin-B12 independent methionine synthase family. It depends on Zn(2+) as a cofactor.

It carries out the reaction 5-methyltetrahydropteroyltri-L-glutamate + L-homocysteine = tetrahydropteroyltri-L-glutamate + L-methionine. It functions in the pathway amino-acid biosynthesis; L-methionine biosynthesis via de novo pathway; L-methionine from L-homocysteine (MetE route): step 1/1. Its function is as follows. Catalyzes the transfer of a methyl group from 5-methyltetrahydrofolate to homocysteine resulting in methionine formation. In Shigella dysenteriae serotype 1 (strain Sd197), this protein is 5-methyltetrahydropteroyltriglutamate--homocysteine methyltransferase.